A 372-amino-acid chain; its full sequence is NAD(P)H-quinone oxidoreductase subunit 1 (372 aa).

Transmembrane regions (helical) follow at residues 27-47 (LIWL…GVLV), 97-117 (LLFT…WLIV), 128-148 (VGVG…GLLM), 166-186 (AAQS…VVMM), 204-224 (ILSW…ICAL), 266-286 (VLSA…PVPV), 308-328 (ATGI…AILL), and 347-367 (FLLP…LAFP).

Belongs to the complex I subunit 1 family. As to quaternary structure, NDH-1 is composed of at least 11 different subunits.

Its subcellular location is the cellular thylakoid membrane. The catalysed reaction is a plastoquinone + NADH + (n+1) H(+)(in) = a plastoquinol + NAD(+) + n H(+)(out). The enzyme catalyses a plastoquinone + NADPH + (n+1) H(+)(in) = a plastoquinol + NADP(+) + n H(+)(out). NDH-1 shuttles electrons from an unknown electron donor, via FMN and iron-sulfur (Fe-S) centers, to quinones in the respiratory and/or the photosynthetic chain. The immediate electron acceptor for the enzyme in this species is believed to be plastoquinone. Couples the redox reaction to proton translocation, and thus conserves the redox energy in a proton gradient. The chain is NAD(P)H-quinone oxidoreductase subunit 1 from Synechococcus sp. (strain WH7803).